Here is a 352-residue protein sequence, read N- to C-terminus: Photosystem II D2 protein (352 aa).

Residues cysteine 40–threonine 60 traverse the membrane as a helical segment. Residue histidine 117 participates in chlorophyll a binding. A helical membrane pass occupies residues glycine 124 to proline 140. Residues glutamine 129 and asparagine 142 each coordinate pheophytin a. A helical transmembrane segment spans residues valine 152–serine 165. Histidine 197 is a binding site for chlorophyll a. The helical transmembrane segment at glycine 207–aspartate 227 threads the bilayer. Positions 214 and 261 each coordinate a plastoquinone. Histidine 214 is a Fe cation binding site. Histidine 268 is a Fe cation binding site. A helical membrane pass occupies residues glycine 278–arginine 294.

The protein belongs to the reaction center PufL/M/PsbA/D family. As to quaternary structure, PSII is composed of 1 copy each of membrane proteins PsbA, PsbB, PsbC, PsbD, PsbE, PsbF, PsbH, PsbI, PsbJ, PsbK, PsbL, PsbM, PsbT, PsbX, PsbY, PsbZ, Psb30/Ycf12, peripheral proteins PsbO, CyanoQ (PsbQ), PsbU, PsbV and a large number of cofactors. It forms dimeric complexes. It depends on The D1/D2 heterodimer binds P680, chlorophylls that are the primary electron donor of PSII, and subsequent electron acceptors. It shares a non-heme iron and each subunit binds pheophytin, quinone, additional chlorophylls, carotenoids and lipids. There is also a Cl(-1) ion associated with D1 and D2, which is required for oxygen evolution. The PSII complex binds additional chlorophylls, carotenoids and specific lipids. as a cofactor.

It is found in the cellular thylakoid membrane. The enzyme catalyses 2 a plastoquinone + 4 hnu + 2 H2O = 2 a plastoquinol + O2. Functionally, photosystem II (PSII) is a light-driven water:plastoquinone oxidoreductase that uses light energy to abstract electrons from H(2)O, generating O(2) and a proton gradient subsequently used for ATP formation. It consists of a core antenna complex that captures photons, and an electron transfer chain that converts photonic excitation into a charge separation. The D1/D2 (PsbA/PsbD) reaction center heterodimer binds P680, the primary electron donor of PSII as well as several subsequent electron acceptors. D2 is needed for assembly of a stable PSII complex. In Synechococcus sp. (strain RCC307), this protein is Photosystem II D2 protein.